The sequence spans 196 residues: Imidazole glycerol phosphate synthase subunit HisH (196 aa).

Positions 2–196 (KVVILDTGCA…AQLLKNFLEM (195 aa)) constitute a Glutamine amidotransferase type-1 domain. Cys-77 acts as the Nucleophile in catalysis. Residues His-178 and Glu-180 contribute to the active site.

In terms of assembly, heterodimer of HisH and HisF.

It is found in the cytoplasm. The catalysed reaction is 5-[(5-phospho-1-deoxy-D-ribulos-1-ylimino)methylamino]-1-(5-phospho-beta-D-ribosyl)imidazole-4-carboxamide + L-glutamine = D-erythro-1-(imidazol-4-yl)glycerol 3-phosphate + 5-amino-1-(5-phospho-beta-D-ribosyl)imidazole-4-carboxamide + L-glutamate + H(+). It carries out the reaction L-glutamine + H2O = L-glutamate + NH4(+). It participates in amino-acid biosynthesis; L-histidine biosynthesis; L-histidine from 5-phospho-alpha-D-ribose 1-diphosphate: step 5/9. In terms of biological role, IGPS catalyzes the conversion of PRFAR and glutamine to IGP, AICAR and glutamate. The HisH subunit catalyzes the hydrolysis of glutamine to glutamate and ammonia as part of the synthesis of IGP and AICAR. The resulting ammonia molecule is channeled to the active site of HisF. The chain is Imidazole glycerol phosphate synthase subunit HisH from Pectobacterium atrosepticum (strain SCRI 1043 / ATCC BAA-672) (Erwinia carotovora subsp. atroseptica).